We begin with the raw amino-acid sequence, 277 residues long: Diaminopimelate epimerase (277 aa).

Substrate contacts are provided by Asn-13, Gln-46, and Asn-66. Cys-75 (proton donor) is an active-site residue. Substrate contacts are provided by residues 76–77 (GN), Asn-160, Asn-193, and 211–212 (ER). Cys-220 (proton acceptor) is an active-site residue. A substrate-binding site is contributed by 221–222 (GT).

It belongs to the diaminopimelate epimerase family. As to quaternary structure, homodimer.

The protein resides in the cytoplasm. It catalyses the reaction (2S,6S)-2,6-diaminopimelate = meso-2,6-diaminopimelate. The protein operates within amino-acid biosynthesis; L-lysine biosynthesis via DAP pathway; DL-2,6-diaminopimelate from LL-2,6-diaminopimelate: step 1/1. Its function is as follows. Catalyzes the stereoinversion of LL-2,6-diaminopimelate (L,L-DAP) to meso-diaminopimelate (meso-DAP), a precursor of L-lysine and an essential component of the bacterial peptidoglycan. In Saccharophagus degradans (strain 2-40 / ATCC 43961 / DSM 17024), this protein is Diaminopimelate epimerase.